The primary structure comprises 704 residues: Elongation factor G (704 aa).

The tr-type G domain maps to 8 to 290; it reads ARYRNIGISA…AVIDYLPSPV (283 aa). Residues 17–24, 88–92, and 142–145 contribute to the GTP site; these read AHIDAGKT, DTPGH, and NKMD.

This sequence belongs to the TRAFAC class translation factor GTPase superfamily. Classic translation factor GTPase family. EF-G/EF-2 subfamily.

It is found in the cytoplasm. In terms of biological role, catalyzes the GTP-dependent ribosomal translocation step during translation elongation. During this step, the ribosome changes from the pre-translocational (PRE) to the post-translocational (POST) state as the newly formed A-site-bound peptidyl-tRNA and P-site-bound deacylated tRNA move to the P and E sites, respectively. Catalyzes the coordinated movement of the two tRNA molecules, the mRNA and conformational changes in the ribosome. The sequence is that of Elongation factor G from Cronobacter sakazakii (strain ATCC BAA-894) (Enterobacter sakazakii).